We begin with the raw amino-acid sequence, 1102 residues long: DNA-directed RNA polymerase subunit beta (1102 aa).

The tract at residues 1081–1102 is disordered; the sequence is LPGKRTPSRPIYESLSTEGNQD.

The protein belongs to the RNA polymerase beta chain family. In cyanobacteria the RNAP catalytic core is composed of 2 alpha, 1 beta, 1 beta', 1 gamma and 1 omega subunit. When a sigma factor is associated with the core the holoenzyme is formed, which can initiate transcription.

The catalysed reaction is RNA(n) + a ribonucleoside 5'-triphosphate = RNA(n+1) + diphosphate. In terms of biological role, DNA-dependent RNA polymerase catalyzes the transcription of DNA into RNA using the four ribonucleoside triphosphates as substrates. This chain is DNA-directed RNA polymerase subunit beta, found in Trichodesmium erythraeum (strain IMS101).